The sequence spans 730 residues: MSDRFELYLTCPKGLESLLAEEAKGLGLDEVREHTSAIRGAADMETAYRLCVWSRLANRVLLVLKRFSMKNADDLYDGVHAVDWADHLAADGTLAVEFSGHGSGIDNTHFGALKVKDAIVDKLRNREGLRPSVEKIDPDVRVHLRLDRGEAILSLDLSGHSLHQRGYRLQQGAAPLKENLAAAVLIRAGWPRIAAEGGALADPMCGVGTFLVEAAMIAADIAPNLKRERWGFSAWLGHVPALWRKVHDEAQARAQAGLAKPPLWIRGYEADPRLIQPGRNNVERAGLGDWVKIYQGEVSTFEPRPDQNQKGLVISNPPYGERLGDEASLLYLYQNLGERLRQACMGWEAAVFTGAPQLGKRMGIRSHKQYAFWNGALPCKLLLFKVQPDQFVTGERREAQPEGTEARQQVPQASEPARLSEGAQMFANRLQKNLKQLGKWARREQIDCYRLYDADMPEYALAVDLYQDWVHVQEYAAPRSVDPDKAQARLLDALAAIPQALGISPQRVVLKRRERQSGTRQYERQATEGRFQEVNEGGVKLLVNLTDYLDTGLFLDHRPMRMRIQREAAGKRFLNLFCYTATATVHAAKGGARSTTSVDLSKTYLDWARRNLALNGYSERNRLEQSDVMAWLEGNRDSYDLIFIDPPTFSNSKRMEGVFDVQRDHVQLLDLAMARLAPGGVLYFSNNFRKFQLDEHLMARYVVEEISAQTLDPDFARNNRIHRAWRLQLR.

One can recognise a THUMP domain in the interval 46–157 (TAYRLCVWSR…RGEAILSLDL (112 aa)). Positions 394–418 (GERREAQPEGTEARQQVPQASEPAR) are disordered.

The protein belongs to the methyltransferase superfamily. RlmKL family.

The protein resides in the cytoplasm. It carries out the reaction guanosine(2445) in 23S rRNA + S-adenosyl-L-methionine = N(2)-methylguanosine(2445) in 23S rRNA + S-adenosyl-L-homocysteine + H(+). The enzyme catalyses guanosine(2069) in 23S rRNA + S-adenosyl-L-methionine = N(2)-methylguanosine(2069) in 23S rRNA + S-adenosyl-L-homocysteine + H(+). In terms of biological role, specifically methylates the guanine in position 2445 (m2G2445) and the guanine in position 2069 (m7G2069) of 23S rRNA. The protein is Ribosomal RNA large subunit methyltransferase K/L of Pseudomonas putida (strain ATCC 700007 / DSM 6899 / JCM 31910 / BCRC 17059 / LMG 24140 / F1).